Consider the following 249-residue polypeptide: Short-chain dehydrogenase virB (249 aa).

Positions 16, 104, 150, 154, 183, and 185 each coordinate NADP(+). Catalysis depends on tyrosine 150, which acts as the Proton donor. The active-site Lowers pKa of active site Tyr is lysine 154.

The protein belongs to the short-chain dehydrogenases/reductases (SDR) family.

The protein operates within secondary metabolite biosynthesis. Its function is as follows. Short-chain dehydrogenase; part of the gene cluster that mediates the biosynthesis of virensols and trichoxide, fungal natural products that contain or are derived from a salicylaldehyde core. The pathway begins with the synthesis of the reduced chain in virensol C by the highly reducing polyketide synthase virA via condensation of one acetate and 8 malonate units. VirA has interesting programming rules since the first 2 ketides are fully reduced, the 3 following ketides undergo beta-dehydration, and the last 3 ketides are only reduced to beta-hydroxys to yield the trihydroxy portion. The production of aldehyde virensol C by virA alone is surprising, since virA does not contain a reductase (R) domain that is typically associated with reductive product release in HRPKS. The cupin-domain enzyme virC is involved in enhancing virA product turnover. The short-chain dehydrogenase virB then oxidizes the C-7 alcohol of virensol C to a ketone, yielding virensol D. Virensol D is further transformed to salicylaldehyde 5-deoxyaurocitrin by the short-chain dehydrogenase virD. VirD catalyzes the dehydrogenation of C-3 to form the beta-ketone aldehyde, which is followed by the generation of the nucleophilic C-2 that is required for the intramolecular aldol condensation between C-2 and C-7, itself followed by dehydration and aromatization which leads to salicylaldehyde 5-deoxyaurocitrin. While the dehydrogenation of virensol D is definitely catalyzed by virD, the aldol condensation and dehydration may be uncatalyzed or assisted by virD. The short chain dehydrogenase virG then converts salicylaldehyde 5-deoxyaurocitrin into virensol B which is further hydroxylated by the cytochrome P450 monooxygenase virE to yield the hydroquinone virensol A. VirI then may oxidize virensol A to form the quinone, while virH performs the epoxidation. Finally, the two remaining short-chain dehydrogenases, virK and virL, are probably responsible for reducing the ketones to the corresponding alcohols to furnish the epoxycyclohexanol structure in trichoxide. The protein is Short-chain dehydrogenase virB of Hypocrea virens (strain Gv29-8 / FGSC 10586) (Gliocladium virens).